Here is a 336-residue protein sequence, read N- to C-terminus: D-alanine--D-alanine ligase (336 aa).

Positions 124 to 330 (KMWFSALGIP…FTEYLSLVIK (207 aa)) constitute an ATP-grasp domain. 154–209 (ALENWGSIFVKAASQGSSVGCYKVDDSSKVAGVLKDAFGYAPYVIVEKTIKARELE) contacts ATP. Mg(2+)-binding residues include Asp-284, Glu-297, and Asn-299.

It belongs to the D-alanine--D-alanine ligase family. It depends on Mg(2+) as a cofactor. Mn(2+) serves as cofactor.

The protein localises to the cytoplasm. It catalyses the reaction 2 D-alanine + ATP = D-alanyl-D-alanine + ADP + phosphate + H(+). It participates in cell wall biogenesis; peptidoglycan biosynthesis. Its function is as follows. Cell wall formation. The sequence is that of D-alanine--D-alanine ligase from Shewanella sp. (strain MR-7).